The following is a 385-amino-acid chain: MTTTVFTSESVSEGHPDKIADQISDAMLDAIMKQDPKARVACETFVKTGMVMLGGEITTSAWVDQEELVRQVVNDIGYNHGDLGFDGETCAVLSSIGKQSPEIAQGVDEYEDHEQGAGDQGLMFGYASNETDVLMPAPIYFAHRLMEKQAELRKAGKLDWLRPDAKSQVTLRYEDGQPVAVDAVVLSTQHSPEVDNKDLHEAVMEEIIKPVLPEGWLHSGTQYHINPTGRFVIGGPVGDAGLTGRKIIVDTYGGMARHGGGAFSGKDPSKVDRSAAYAGRYVAKNIVAAGLADKCEIQVSYAIGVAAPTSISIETFGTEKVAVSLIEKLVREHFDLRPKGLIAMLDLYRPIYQKTASYGHFGRELPEFTWEKTDKAAALRADAGL.

His-15 contributes to the ATP binding site. Asp-17 lines the Mg(2+) pocket. Glu-43 contributes to the K(+) binding site. Positions 56 and 99 each coordinate L-methionine. Positions 99-109 (QSPEIAQGVDE) are flexible loop. ATP is bound by residues 164-166 (DAK), 230-231 (RF), Asp-239, 245-246 (RK), Ala-262, and Lys-266. L-methionine is bound at residue Asp-239. Lys-270 contributes to the L-methionine binding site.

It belongs to the AdoMet synthase family. Homotetramer; dimer of dimers. Mg(2+) serves as cofactor. It depends on K(+) as a cofactor.

Its subcellular location is the cytoplasm. The enzyme catalyses L-methionine + ATP + H2O = S-adenosyl-L-methionine + phosphate + diphosphate. The protein operates within amino-acid biosynthesis; S-adenosyl-L-methionine biosynthesis; S-adenosyl-L-methionine from L-methionine: step 1/1. Its function is as follows. Catalyzes the formation of S-adenosylmethionine (AdoMet) from methionine and ATP. The overall synthetic reaction is composed of two sequential steps, AdoMet formation and the subsequent tripolyphosphate hydrolysis which occurs prior to release of AdoMet from the enzyme. This is S-adenosylmethionine synthase from Hydrogenovibrio crunogenus (strain DSM 25203 / XCL-2) (Thiomicrospira crunogena).